The primary structure comprises 223 residues: Sigma non-opioid intracellular receptor 1 (223 aa).

Topologically, residues 1–7 (MAVLSSR) are lumenal. A helical membrane pass occupies residues 8-29 (AMRAALGLAVLAVVIQLLRTWL). Topologically, residues 30 to 223 (SSKSYLFNQK…HTYLSELGLS (194 aa)) are cytoplasmic. Residues 98 to 105 (SLTEYILL) form an important for ligand-binding region. A C-terminal hydrophobic region region spans residues 176–223 (FIPSTMGFALADTIFSTQDFCTLFYTFRIYARCLLLETHTYLSELGLS).

The protein belongs to the ERG2 family. Homotrimer.

Its subcellular location is the nucleus inner membrane. It is found in the nucleus outer membrane. The protein localises to the nucleus envelope. The protein resides in the cytoplasmic vesicle. It localises to the endoplasmic reticulum membrane. Its subcellular location is the membrane. May function in lipid transport from the endoplasmic reticulum and be involved in a wide array of cellular functions probably through regulation of the biogenesis of lipid microdomains at the plasma membrane. May regulate calcium efflux at the endoplasmic reticulum. This chain is Sigma non-opioid intracellular receptor 1 (SIGMAR1), found in Taricha granulosa (Roughskin newt).